The following is a 2716-amino-acid chain: Trithorax group protein osa (2716 aa).

The segment at 1–969 is disordered; it reads MNEKIKSPQT…RPAGSPQVFN (969 aa). The span at 7–38 shows a compositional bias: low complexity; the sequence is SPQTQQQQQGGAPAPAATPPSAGAAPGAATPP. Positions 54–64 are enriched in polar residues; sequence DPSIQQQQQNV. A compositionally biased stretch (pro residues) spans 69-86; sequence YGAPPPPGSGPGGPPGPD. Composition is skewed to low complexity over residues 164–180, 212–222, and 238–257; these read GQPL…QPHP, TPTLNSLLQSS, and PQQA…QQAG. Over residues 258–272 the composition is skewed to pro residues; sequence GPPPPGHGPPPPQHQ. The span at 294–312 shows a compositional bias: polar residues; the sequence is LGPSQQYRTPPPTNTSRGQ. Residues 320–346 are compositionally biased toward low complexity; that stretch reads GQNSGSYPSSPQQQQQQQQQQQQQAGQ. Pro residues predominate over residues 350 to 359; sequence GPVPGGPPPG. The span at 360-377 shows a compositional bias: low complexity; that stretch reads TGQQPPQQNTPPTSQYSP. A Phosphothreonine modification is found at threonine 384. The span at 394–403 shows a compositional bias: polar residues; it reads NHRTAYSTHQ. A compositionally biased stretch (low complexity) spans 411-423; that stretch reads WPGGSSPSPGSGH. Residues 424–466 are compositionally biased toward pro residues; it reads PLPPASPHHVPPLQQQPPPPPHVSAGGPPPSSSPGHAPSPSPQ. Low complexity-rich tracts occupy residues 467-476 and 509-526; these read PSQASPSPHQ and MRPT…SMSP. A compositionally biased stretch (pro residues) spans 557–571; it reads GPPPMPPHPGMPGGP. Low complexity predominate over residues 572-594; it reads PQQQQSQQQQASNSASSASNSPQ. Composition is skewed to pro residues over residues 595–604, 651–669, 747–760, and 806–818; these read QTPPPAPPPN, PQQP…PQYP, TPPP…PPPQ, and PMGP…PPHG. Threonine 747 is modified (phosphothreonine). A compositionally biased stretch (low complexity) spans 819 to 838; sequence PTNMGPPTSTPPQSQMLQGG. The span at 839-851 shows a compositional bias: gly residues; that stretch reads QPQGQGASGGPES. Composition is skewed to polar residues over residues 859-868 and 879-904; these read QDNGISSSGP and SVVT…NASA. The ARID domain occupies 1000-1091; that stretch reads NPDRRGWLDK…NLLTFECHFD (92 aa). Disordered regions lie at residues 1108-1766, 1914-1936, and 2045-2123; these read SKKK…PGGG, HYEN…EDAD, and KGRK…DCRP. Composition is skewed to low complexity over residues 1129–1139 and 1164–1173; these read GTTNSTGSSNS and GSPYPVASGP. Over residues 1181 to 1193 the composition is skewed to polar residues; that stretch reads GQMQRPPSQNNPQ. Residues 1221–1256 show a composition bias toward gly residues; the sequence is AGGGPGSGTGPGPGQGPGPGAASGGAGAVGAVGGGP. Over residues 1266–1288 the composition is skewed to low complexity; that stretch reads PHTAAQQAAGQHQQQHPQHQHPG. The span at 1305-1318 shows a compositional bias: pro residues; sequence QPPPSVGGGPPPAP. Residues 1407–1427 are compositionally biased toward low complexity; the sequence is PEGEAPPTGANQYGPYGSRPY. Positions 1428–1438 are enriched in pro residues; the sequence is SQPPPGGPQPP. Residues 1456–1471 show a composition bias toward low complexity; sequence PSSAYPTGRPSQQDYY. Polar residues predominate over residues 1508–1524; it reads QSGTQQYRPQYPSSPAP. A compositionally biased stretch (pro residues) spans 1534-1548; sequence GAAPPPGAPHGPPIQ. Positions 1573–1593 are enriched in low complexity; sequence QQQQPQQQQQQPPYQQVAGPP. A compositionally biased stretch (pro residues) spans 1620 to 1629; that stretch reads PGSPLRPPSG. Composition is skewed to low complexity over residues 1636 to 1652 and 1715 to 1729; these read MPGM…QGGV and GQAM…QPPS. Residues 1731–1744 are compositionally biased toward basic residues; it reads QHPHPHQHPQHQHP. Over residues 1755 to 1766 the composition is skewed to gly residues; it reads GGYGPPGMPGGG. The EHD domain occupies 1769–2517; it reads LVKKELIFPH…PIHSVEFRLL (749 aa). A phosphoserine mark is found at serine 1930, serine 1932, and serine 2081. 2 stretches are compositionally biased toward basic and acidic residues: residues 2091–2100 and 2109–2123; these read AEGKKSKLTS and EVKK…DCRP. Phosphoserine is present on residues serine 2168 and serine 2169. A Phosphothreonine modification is found at threonine 2176. At serine 2181 the chain carries Phosphoserine. A compositionally biased stretch (low complexity) spans 2520 to 2566; the sequence is RQQQQLRPGPAGKQAASAGGSATVKAETASTETSSTEAKPAPAATTA. Disordered stretches follow at residues 2520-2617 and 2684-2716; these read RQQQ…SHSS and VGPP…TAVA. Over residues 2570 to 2579 the composition is skewed to polar residues; that stretch reads DENSNSSQQL. Low complexity-rich tracts occupy residues 2584–2617 and 2684–2701; these read TFND…SHSS and VGPP…VAQP.

As to quaternary structure, component of the Brahma complex, which is composed of Brm, Osa, Mor, Snr1/Bap45, Bap111/Dalao, Bap55, Bap60 and Bap47. Interacts with Pnr and Chi via its EHD domain. As to expression, ubiquitously expressed in early embryo. In third instar larvae, it is ubiquitously expressed in wing and eye-antenna imaginal disks, with a stronger expression in a band just anterior to the morphogenetic furrow.

The protein resides in the nucleus. Its function is as follows. Trithorax group (trxG) protein required for embryonic segmentation, development of the notum and wing margin, and photoreceptor differentiation. Required for the activation of genes such as Antp, Ubx and Eve. Binds to DNA without specific affinity, suggesting that it is recruited to promoters by promoter-specific proteins. Essential component of the Brahma complex, a multiprotein complex which is the equivalent of the yeast SWI/SNF complex and acts by remodeling the chromatin by catalyzing an ATP-dependent alteration in the structure of nucleosomal DNA. This complex can both serve as a transcriptional coactivator or corepressor, depending on the context. Acts as an essential coactivator for Zeste, which recruits the whole complex to specific genes. In contrast, it acts as a corepressor for Wg target genes, possibly via an interaction with Pan and Gro. It also acts as a negative regulator for proneural achaete-scute, when it is directly recruited by Pan and Chi. Also represses E2f activation. In Drosophila melanogaster (Fruit fly), this protein is Trithorax group protein osa (osa).